The sequence spans 953 residues: Isoleucine--tRNA ligase (953 aa).

A 'HIGH' region motif is present at residues 57–67 (PYANGDIHIGH). Residue E582 participates in L-isoleucyl-5'-AMP binding. The 'KMSKS' region signature appears at 623-627 (KMSKS). K626 is an ATP binding site. Zn(2+)-binding residues include C916, C919, C936, and C939.

The protein belongs to the class-I aminoacyl-tRNA synthetase family. IleS type 1 subfamily. Monomer. The cofactor is Zn(2+).

It localises to the cytoplasm. It carries out the reaction tRNA(Ile) + L-isoleucine + ATP = L-isoleucyl-tRNA(Ile) + AMP + diphosphate. Its function is as follows. Catalyzes the attachment of isoleucine to tRNA(Ile). As IleRS can inadvertently accommodate and process structurally similar amino acids such as valine, to avoid such errors it has two additional distinct tRNA(Ile)-dependent editing activities. One activity is designated as 'pretransfer' editing and involves the hydrolysis of activated Val-AMP. The other activity is designated 'posttransfer' editing and involves deacylation of mischarged Val-tRNA(Ile). The chain is Isoleucine--tRNA ligase from Bordetella pertussis (strain Tohama I / ATCC BAA-589 / NCTC 13251).